The primary structure comprises 494 residues: UPF0371 protein stu1377 (494 aa).

This sequence belongs to the UPF0371 family.

This Streptococcus thermophilus (strain ATCC BAA-250 / LMG 18311) protein is UPF0371 protein stu1377.